The primary structure comprises 217 residues: Large ribosomal subunit protein uL4c (217 aa).

A disordered region spans residues 51–85 (HRNRNAHTQTRGEVSGGGRKPWKQKGTGRARAGSN).

It belongs to the universal ribosomal protein uL4 family. As to quaternary structure, part of the 50S ribosomal subunit.

It localises to the plastid. The protein resides in the chloroplast. Its function is as follows. Probably binds the 23S rRNA. This is Large ribosomal subunit protein uL4c (rpl4) from Gracilaria tenuistipitata var. liui (Red alga).